Here is a 683-residue protein sequence, read N- to C-terminus: Leucine-rich repeat protein soc-2 homolog (683 aa).

The segment covering 1–19 (MNLCSSGATASTTSLSSTG) has biased composition (low complexity). Disordered stretches follow at residues 1–54 (MNLC…SDVS) and 74–150 (GTDE…IQAD). The segment covering 26–49 (GVPGGGAEGGGGGGGSGNSGGGGK) has biased composition (gly residues). The segment covering 74 to 86 (GTDELSNANSPAN) has biased composition (low complexity). The span at 99–117 (QQPTGSNGHSHLHNENNAN) shows a compositional bias: polar residues. 20 LRR repeats span residues 164–185 (GIKR…VKEC), 187–208 (HLTE…IGCL), 210–231 (SLRN…LQNC), 233–254 (QLKV…IYRL), 256–277 (SLTT…LRQL), 279–300 (NLTM…IGAL), 302–323 (NLTT…IGNC), 325–346 (NLSA…IGNL), 348–370 (SLVR…KNCK), 371–392 (SMDE…MLAS), 395–416 (GLTT…GPAQ), 419–440 (NVYS…IFSR), 443–464 (GLTK…IGTW), 466–487 (NMVE…IMNL), 489–510 (NLEI…IGNL), 512–533 (RLRI…IGLL), 535–556 (ELQR…IGHL), 558–579 (NLTH…IGSL), 581–603 (SLEN…LALC), and 605–626 (NLKY…IQAG). The span at 661–671 (AGGNGGGGAAA) shows a compositional bias: gly residues. A disordered region spans residues 661–683 (AGGNGGGGAAAAGGSASRSSDRR). The span at 672-683 (AGGSASRSSDRR) shows a compositional bias: low complexity.

It belongs to the SHOC2 family.

Acts as a Ras effector and participates in MAPK pathway activation. Probably acts as a regulatory subunit of protein phosphatase that specifically dephosphorylates Raf kinase and stimulate Raf activity at specialized signaling complexes upon Ras activation. The sequence is that of Leucine-rich repeat protein soc-2 homolog (Sur-8) from Drosophila sechellia (Fruit fly).